Here is a 431-residue protein sequence, read N- to C-terminus: ATP-dependent RNA helicase DBP8 (431 aa).

The Q motif motif lies at Ala2–Lys30. The Helicase ATP-binding domain occupies Ile33–Pro209. Ala46–Thr53 provides a ligand contact to ATP. Residues Asp155–Asp158 carry the DEAD box motif. In terms of domain architecture, Helicase C-terminal spans Tyr242–Ile389. The disordered stretch occupies residues Leu404 to Ser431. Basic and acidic residues predominate over residues Asn411–Ser431.

It belongs to the DEAD box helicase family. DDX49/DBP8 subfamily. As to quaternary structure, interacts with ESF2.

The protein resides in the nucleus. Its subcellular location is the nucleolus. The catalysed reaction is ATP + H2O = ADP + phosphate + H(+). Its function is as follows. ATP-binding RNA helicase involved in 40S ribosomal subunit biogenesis and is required for the normal formation of 18S rRNAs through pre-rRNA processing at A0, A1 and A2 sites. Required for vegetative growth. The chain is ATP-dependent RNA helicase DBP8 (DBP8) from Saccharomyces cerevisiae (strain YJM789) (Baker's yeast).